The following is a 501-amino-acid chain: Lysine--tRNA ligase (501 aa).

E412 and E419 together coordinate Mg(2+).

Belongs to the class-II aminoacyl-tRNA synthetase family. In terms of assembly, homodimer. Mg(2+) is required as a cofactor.

It is found in the cytoplasm. It carries out the reaction tRNA(Lys) + L-lysine + ATP = L-lysyl-tRNA(Lys) + AMP + diphosphate. This Chlorobium luteolum (strain DSM 273 / BCRC 81028 / 2530) (Pelodictyon luteolum) protein is Lysine--tRNA ligase.